The primary structure comprises 210 residues: Protein-methionine-sulfoxide reductase heme-binding subunit MsrQ (210 aa).

A run of 6 helical transmembrane segments spans residues Leu-8–Phe-28, Val-37–Thr-57, Leu-75–Leu-95, Pro-110–Asn-130, Leu-147–Leu-167, and Glu-169–Thr-189.

The protein belongs to the MsrQ family. In terms of assembly, heterodimer of a catalytic subunit (MsrP) and a heme-binding subunit (MsrQ). The cofactor is FMN. Heme b serves as cofactor.

The protein localises to the cell inner membrane. Functionally, part of the MsrPQ system that repairs oxidized periplasmic proteins containing methionine sulfoxide residues (Met-O), using respiratory chain electrons. Thus protects these proteins from oxidative-stress damage caused by reactive species of oxygen and chlorine generated by the host defense mechanisms. MsrPQ is essential for the maintenance of envelope integrity under bleach stress, rescuing a wide series of structurally unrelated periplasmic proteins from methionine oxidation. MsrQ provides electrons for reduction to the reductase catalytic subunit MsrP, using the quinone pool of the respiratory chain. This is Protein-methionine-sulfoxide reductase heme-binding subunit MsrQ from Pseudomonas savastanoi pv. phaseolicola (strain 1448A / Race 6) (Pseudomonas syringae pv. phaseolicola (strain 1448A / Race 6)).